The primary structure comprises 224 residues: Lipoprotein-releasing system ATP-binding protein LolD (224 aa).

An ABC transporter domain is found at 5 to 224 (LRAENIKKVI…GKVVGEITRV (220 aa)). 37-44 (GASGSGKS) lines the ATP pocket.

Belongs to the ABC transporter superfamily. Lipoprotein translocase (TC 3.A.1.125) family. As to quaternary structure, the complex is composed of two ATP-binding proteins (LolD) and two transmembrane proteins (LolC and LolE).

It is found in the cell inner membrane. Part of the ABC transporter complex LolCDE involved in the translocation of mature outer membrane-directed lipoproteins, from the inner membrane to the periplasmic chaperone, LolA. Responsible for the formation of the LolA-lipoprotein complex in an ATP-dependent manner. The sequence is that of Lipoprotein-releasing system ATP-binding protein LolD from Aquifex aeolicus (strain VF5).